The sequence spans 1145 residues: MAYPEKVGNRVRWNYGKLREVLDLPNLIEVQRNSYEWFLQEGLREVFHDISPIQDFTGNLILEFLDYTLGEPKYSVEECKERDVTYAAPLRVKVRLINKETGEVKEQEVFMGDFPLMTSKGTFIINGAERVIVSQLVRSPGVYFADQIDPSGKRLFATTMIPNRGAWLEFETDVNDHIFVRIDRTRKIPATVLIRALGYGSNALIMELFENDKFVQETLTRDNTDTEEEALVEIYKRLRPGEPPTVESARSLLNTLFFDPKRYDLAHVGRYKLQKKLKHGILYRYPNGEEGPKEWDRLLNKEVPVDREFIRELTKEDIIATFRYLLNLMQGEGIVDDIDHLGNRRLRSVGELLQNQFRIGLSRMERVVRERMTIQDVDVITPQVLINIRPVVASIKEFFGSSQLSQFMDQTNPLAELTHKRRLSALGPGGLSRERAGFEVRDVHHSHYGRMCPIETPEGPNIGLIGSLSTYARINSFGFMEAPYRKVDKENKRVTDEIVYLTADEEEDHIIAQANAPLDENGYFVEERVNARRGHDTLLVPTDRVEYMDVSPKQVFSVATSLIPFLEHDDANRALMGANMQRQAVPLLRCQAPVVGTGIEHRAAKDSGVCIVAERGGEVVRVTATEVAVRTDEGRTDTYKLLKFTRSNQGTCINQKPIVNKGDRVEEGQILADGPATEQGELALGRNILVAFMTWEGNNYEDAILISEKAVKEDFFTSIHIEEYECDARDTKLGPEEITRDIPNVGEDILKDLDERGIIRVGAEVRPGDILVGKVTPKGETELTAEERLLRAIFGEKAREVRDTSLRVPHGEAGKIVDVKVFSRENGDELPPGVNHLVRCYIAQKRKISEGDKMAGRHGNKGVVARILPEEDMPFMADGTPVQIVLNPLGVPSRMNIGQVLETHLGWAAKTLGFNVATPVFNGASEESIWETLRRAELPEDGKTVLYDGRTGEPFDNRVTVGYIYMIKLHHLVDDKIHARSTGPYSLVTQQPLGGKAQFGGQRFGEMEVWALEAYGAAYTLQEILTVKSDDVVGRVKTYEAIVKGENVPEPGVPESFKVLIKELQSLGLDVKVLAEDEKEIEIKEIEEDITETAKELGIELPEERRVSSSKEEIEEEEEVEDNSDEFDETFLEEAEDDFSLDDED.

Basic and acidic residues predominate over residues 1101–1112 (LPEERRVSSSKE). A disordered region spans residues 1101–1145 (LPEERRVSSSKEEIEEEEEVEDNSDEFDETFLEEAEDDFSLDDED). Residues 1113–1145 (EIEEEEEVEDNSDEFDETFLEEAEDDFSLDDED) show a composition bias toward acidic residues.

It belongs to the RNA polymerase beta chain family. In terms of assembly, the RNAP catalytic core consists of 2 alpha, 1 beta, 1 beta' and 1 omega subunit. When a sigma factor is associated with the core the holoenzyme is formed, which can initiate transcription.

It carries out the reaction RNA(n) + a ribonucleoside 5'-triphosphate = RNA(n+1) + diphosphate. In terms of biological role, DNA-dependent RNA polymerase catalyzes the transcription of DNA into RNA using the four ribonucleoside triphosphates as substrates. This is DNA-directed RNA polymerase subunit beta from Desulforamulus reducens (strain ATCC BAA-1160 / DSM 100696 / MI-1) (Desulfotomaculum reducens).